The following is a 141-amino-acid chain: Small ribosomal subunit protein bS6 (141 aa).

Residues 97–141 (TGQSEMLKAEENRSERRERRDRPEHSDSADGDDGDNSDVSDNADE) form a disordered region. Residues 103-124 (LKAEENRSERRERRDRPEHSDS) are compositionally biased toward basic and acidic residues. The segment covering 125–141 (ADGDDGDNSDVSDNADE) has biased composition (acidic residues).

The protein belongs to the bacterial ribosomal protein bS6 family.

Its function is as follows. Binds together with bS18 to 16S ribosomal RNA. The polypeptide is Small ribosomal subunit protein bS6 (Pseudomonas syringae pv. syringae (strain B728a)).